A 227-amino-acid polypeptide reads, in one-letter code: Cytochrome c oxidase subunit 2 (227 aa).

Residues 1 to 14 (MAYPFQLGLQDATS) lie on the Mitochondrial intermembrane side of the membrane. Residues 15–45 (PIMEELLHFHDHTLMIVFLISSLVLYIISLM) form a helical membrane-spanning segment. Residues 46-59 (LTTKLTHTSTMDAQ) lie on the Mitochondrial matrix side of the membrane. A helical transmembrane segment spans residues 60-87 (EVETVWTILPAIILISIALPSLRILYMM). Over 88-227 (DEINNPSLTV…YFEAWSTLMM (140 aa)) the chain is Mitochondrial intermembrane. Residues His161, Cys196, Glu198, Cys200, His204, and Met207 each coordinate Cu cation. Glu198 serves as a coordination point for Mg(2+). The residue at position 218 (Tyr218) is a Phosphotyrosine.

The protein belongs to the cytochrome c oxidase subunit 2 family. In terms of assembly, component of the cytochrome c oxidase (complex IV, CIV), a multisubunit enzyme composed of 14 subunits. The complex is composed of a catalytic core of 3 subunits MT-CO1, MT-CO2 and MT-CO3, encoded in the mitochondrial DNA, and 11 supernumerary subunits COX4I, COX5A, COX5B, COX6A, COX6B, COX6C, COX7A, COX7B, COX7C, COX8 and NDUFA4, which are encoded in the nuclear genome. The complex exists as a monomer or a dimer and forms supercomplexes (SCs) in the inner mitochondrial membrane with NADH-ubiquinone oxidoreductase (complex I, CI) and ubiquinol-cytochrome c oxidoreductase (cytochrome b-c1 complex, complex III, CIII), resulting in different assemblies (supercomplex SCI(1)III(2)IV(1) and megacomplex MCI(2)III(2)IV(2)). Found in a complex with TMEM177, COA6, COX18, COX20, SCO1 and SCO2. Interacts with TMEM177 in a COX20-dependent manner. Interacts with COX20. Interacts with COX16. Cu cation serves as cofactor.

Its subcellular location is the mitochondrion inner membrane. It carries out the reaction 4 Fe(II)-[cytochrome c] + O2 + 8 H(+)(in) = 4 Fe(III)-[cytochrome c] + 2 H2O + 4 H(+)(out). In terms of biological role, component of the cytochrome c oxidase, the last enzyme in the mitochondrial electron transport chain which drives oxidative phosphorylation. The respiratory chain contains 3 multisubunit complexes succinate dehydrogenase (complex II, CII), ubiquinol-cytochrome c oxidoreductase (cytochrome b-c1 complex, complex III, CIII) and cytochrome c oxidase (complex IV, CIV), that cooperate to transfer electrons derived from NADH and succinate to molecular oxygen, creating an electrochemical gradient over the inner membrane that drives transmembrane transport and the ATP synthase. Cytochrome c oxidase is the component of the respiratory chain that catalyzes the reduction of oxygen to water. Electrons originating from reduced cytochrome c in the intermembrane space (IMS) are transferred via the dinuclear copper A center (CU(A)) of subunit 2 and heme A of subunit 1 to the active site in subunit 1, a binuclear center (BNC) formed by heme A3 and copper B (CU(B)). The BNC reduces molecular oxygen to 2 water molecules using 4 electrons from cytochrome c in the IMS and 4 protons from the mitochondrial matrix. The protein is Cytochrome c oxidase subunit 2 (MT-CO2) of Lycaon pictus (African wild dog).